The following is a 695-amino-acid chain: IQ domain-containing protein E (695 aa).

The tract at residues 29–55 (KAKRKAFHKPPPTSPKSPYLSKPRKVA) is disordered. Coiled-coil stretches lie at residues 157–264 (LHVQ…RLQT), 292–358 (SALL…SSKS), and 387–477 (NKDH…CPEV). Ser-322 bears the Phosphoserine mark. 4 disordered regions span residues 357–390 (KSHAAEPVRSHPPACLASSSALHRQPRGDRNKDH), 465–521 (EMKK…RRDA), 564–599 (ASKAHGSEPPSVPGLPDQSSPVPRVPSPIAQATGSP), and 618–695 (RARH…NFPV). The segment covering 465–482 (EMKKEEKEDCPEVPHKAQ) has biased composition (basic and acidic residues). IQ domains are found at residues 542 to 571 (LDEAAVVLQAAFRGHLTRTKLLASKAHGSE) and 601 to 630 (QEEAIVIIQSALRAHLARARHSATGKRTTT).

In terms of assembly, component of the EvC complex composed of EFCAB7, IQCE, EVC2 and EVC; built from two subcomplexes, EVC2:EVC and EFCAB7:IQCE. Interacts (via N-terminus) with EFCAB7 (via EF-hands 1 and 2); this interaction anchors the EVC-EVC2 complex in a signaling microdomain at the base of cilia and stimulates the Hedgehog (Hh) pathway. Interacts with EVC2 (via N-terminal end). Interacts with EVC.

It is found in the cell projection. It localises to the cilium membrane. Component of the EvC complex that positively regulates ciliary Hedgehog (Hh) signaling. Required for proper limb morphogenesis. In Homo sapiens (Human), this protein is IQ domain-containing protein E (IQCE).